Reading from the N-terminus, the 330-residue chain is MNKFKNIAVYGGGSFGTSLASLAAQNCNNVTLFLRDEAIAKEILHNKTNIKYLGDIKLPAHLQATTNLDIIKDFELIIIAVPSYAFDDSIKLLKTHSISKDNTLLIATKGFARNPTALFSDRLKTLLPHSPTAFFAGPNLAKELAKNLPASASIASLDIDIANKIAYNLSAKIFTTNVSSDIVTLQVAGALKNIFAIKSGIDLARKQGENARATLIVAALKEIAILSQALGGMQKNSDILLEVGVVGDLVLTCYSLGSRNTKFGYELGISSDKKKFLQEYKELVEGREALKLVLDLIKKYNLHMPVISKVASCVIPYVIPAKAGIQHKAR.

Residues Ser-14, Phe-15, Arg-35, and Lys-109 each contribute to the NADPH site. 2 residues coordinate sn-glycerol 3-phosphate: Lys-109 and Gly-137. Ala-141 is an NADPH binding site. Sn-glycerol 3-phosphate is bound by residues Lys-192, Asp-248, Ser-258, Arg-259, and Asn-260. Lys-192 serves as the catalytic Proton acceptor. Arg-259 is a binding site for NADPH. The NADPH site is built by Leu-283 and Glu-285.

It belongs to the NAD-dependent glycerol-3-phosphate dehydrogenase family.

The protein resides in the cytoplasm. It carries out the reaction sn-glycerol 3-phosphate + NAD(+) = dihydroxyacetone phosphate + NADH + H(+). The enzyme catalyses sn-glycerol 3-phosphate + NADP(+) = dihydroxyacetone phosphate + NADPH + H(+). It participates in membrane lipid metabolism; glycerophospholipid metabolism. Catalyzes the reduction of the glycolytic intermediate dihydroxyacetone phosphate (DHAP) to sn-glycerol 3-phosphate (G3P), the key precursor for phospholipid synthesis. The protein is Glycerol-3-phosphate dehydrogenase [NAD(P)+] of Rickettsia massiliae (strain Mtu5).